The chain runs to 442 residues: Protein cereblon (442 aa).

A disordered region spans residues 1 to 45; the sequence is MAGEGDQQDAAHNMGNHLPLLPAESEEEDEMEVEDQDSKEAKKPN. Residues 24–35 are compositionally biased toward acidic residues; sequence ESEEEDEMEVED. Serine 25 bears the Phosphoserine mark. In terms of domain architecture, Lon N-terminal spans 81-319; it reads IPVLPQVMMI…CELDIMNKCT (239 aa). Positions 318-426 constitute a CULT domain; it reads CTSLCCKQCQ…LTRSALLPTI (109 aa). Zn(2+) contacts are provided by cysteine 323 and cysteine 326. Positions 378, 380, and 386 each coordinate (S)-thalidomide. The Zn(2+) site is built by cysteine 391 and cysteine 394.

Belongs to the CRBN family. Interacts with KCNT1. Component of a DCX (DDB1-CUL4-X-box) protein ligase complex, at least composed of CRBN, CUL4A, DDB1 and RBX1. Interacts directly with DDB1. Interacts (in pomalidomide-bound form) with IKZF1 and IKZF3. Interacts with ILF2. Interacts with TRAF6 and ECSIT. In terms of processing, ubiquitinated, ubiquitination is mediated by its own DCX protein ligase complex. As to expression, widely expressed. Highly expressed in brain.

The protein localises to the cytoplasm. The protein resides in the nucleus. It localises to the membrane. It participates in protein modification; protein ubiquitination. Functionally, substrate recognition component of a DCX (DDB1-CUL4-X-box) E3 protein ligase complex that mediates the ubiquitination and subsequent proteasomal degradation of target proteins, such as MEIS2, ILF2 or GLUL. Normal degradation of key regulatory proteins is required for normal limb outgrowth and expression of the fibroblast growth factor FGF8. Maintains presynaptic glutamate release and consequently cognitive functions, such as memory and learning, by negatively regulating large-conductance calcium-activated potassium (BK) channels in excitatory neurons. Likely to function by regulating the assembly and neuronal surface expression of BK channels via its interaction with KCNT1. May also be involved in regulating anxiety-like behaviors via a BK channel-independent mechanism. Plays a negative role in TLR4 signaling by interacting with TRAF6 and ECSIT, leading to inhibition of ECSIT ubiquitination, an important step of the signaling. This is Protein cereblon (CRBN) from Homo sapiens (Human).